Reading from the N-terminus, the 135-residue chain is Large ribosomal subunit protein uL22c (135 aa).

The protein belongs to the universal ribosomal protein uL22 family. As to quaternary structure, part of the 50S ribosomal subunit.

It is found in the plastid. Functionally, this protein binds specifically to 23S rRNA. The globular domain of the protein is located near the polypeptide exit tunnel on the outside of the subunit, while an extended beta-hairpin is found that lines the wall of the exit tunnel in the center of the 70S ribosome. The polypeptide is Large ribosomal subunit protein uL22c (rpl22) (Cuscuta reflexa (Southern Asian dodder)).